The following is a 289-amino-acid chain: 33 kDa chaperonin (289 aa).

2 cysteine pairs are disulfide-bonded: cysteine 237-cysteine 239 and cysteine 270-cysteine 273.

This sequence belongs to the HSP33 family. Under oxidizing conditions two disulfide bonds are formed involving the reactive cysteines. Under reducing conditions zinc is bound to the reactive cysteines and the protein is inactive.

It is found in the cytoplasm. In terms of biological role, redox regulated molecular chaperone. Protects both thermally unfolding and oxidatively damaged proteins from irreversible aggregation. Plays an important role in the bacterial defense system toward oxidative stress. The polypeptide is 33 kDa chaperonin (Oceanobacillus iheyensis (strain DSM 14371 / CIP 107618 / JCM 11309 / KCTC 3954 / HTE831)).